Reading from the N-terminus, the 130-residue chain is Protein ApaG (130 aa).

An ApaG domain is found at 3 to 127 (RAVTRHIEVT…FSLDSPDGKR (125 aa)).

This Bradyrhizobium sp. (strain ORS 278) protein is Protein ApaG.